The primary structure comprises 253 residues: 5-oxoprolinase subunit A (253 aa).

The protein belongs to the LamB/PxpA family. As to quaternary structure, forms a complex composed of PxpA, PxpB and PxpC.

It catalyses the reaction 5-oxo-L-proline + ATP + 2 H2O = L-glutamate + ADP + phosphate + H(+). Functionally, catalyzes the cleavage of 5-oxoproline to form L-glutamate coupled to the hydrolysis of ATP to ADP and inorganic phosphate. In Shouchella clausii (strain KSM-K16) (Alkalihalobacillus clausii), this protein is 5-oxoprolinase subunit A.